A 344-amino-acid polypeptide reads, in one-letter code: MASATTHFQPKNVPFRFLGRSGLKVSAFSLGGWLTYGNEGYDVEHTKNCLKQAWDLGINTFDTAEIYSNGNSETVMGKAIKELGWDRSEYVITTKVFFGAGTKLPNTTGLSRKHIIEGLNASLKRLGLPYVDVIMAHRPDPSVPMEEVVRAFTQLIQDGKAFYWGTSEWSAFEIEHAHHIATKYNLIAPVADQPQYNYLTRDHFEKDLLPLQQIYGYGATVWSPLKSGILTGKYNDGIPEGSRLSTTFTSLAGQLQTPEGKTQLDQVRQISKIAEQIGATPSQLALAWTLKNPYVSTTILGASKPEQIVENVKAVEFIDKLTPEILKKIDEILNFTPLEIQYRR.

16 residues coordinate NADP(+): Trp33, Asp62, Tyr67, Ser167, Gln193, Trp222, Ser223, Pro224, Leu225, Lys233, Arg243, Gly301, Ser303, Gln307, Glu310, and Asn311. Tyr67 functions as the Proton donor/acceptor in the catalytic mechanism.

This sequence belongs to the shaker potassium channel beta subunit family. As to quaternary structure, forms heteromultimeric complexes with potassium channel alpha subunits.

The protein localises to the cytoplasm. It is found in the nucleus. Its function is as follows. Probable accessory potassium channel protein which modulates the activity of the pore-forming alpha subunit. This is Putative voltage-gated potassium channel subunit beta from Schizosaccharomyces pombe (strain 972 / ATCC 24843) (Fission yeast).